We begin with the raw amino-acid sequence, 225 residues long: Glutathione S-transferase-like protein tpcF (225 aa).

Residues 4–85 (IQPITVYGKG…YLVSHYDPDH (82 aa)) enclose the GST N-terminal domain. Residues 92–225 (GSNLAALATQ…KGMADIFPST (134 aa)) enclose the GST C-terminal domain.

It belongs to the GST superfamily. As to expression, specifically expressed in conidia.

It functions in the pathway secondary metabolite biosynthesis. Glutathione S-transferase-like protein; part of the gene cluster that mediates the biosynthesis of trypacidin, a mycotoxin with antiprotozoal activity and that plays a role in the infection process. The pathway begins with the synthesis of atrochrysone thioester by the polyketide synthase (PKS) tpcC. The atrochrysone carboxyl ACP thioesterase tpcB then breaks the thioester bond and releases the atrochrysone carboxylic acid from tpcC. The decarboxylase tpcK converts atrochrysone carboxylic acid to atrochrysone which is further reduced into emodin anthrone. The next step is performed by the emodin anthrone oxygenase tpcL that catalyzes the oxidation of emodinanthrone to emodin. Emodin O-methyltransferase encoded by tpcA catalyzes methylation of the 8-hydroxy group of emodin to form questin. Ring cleavage of questin by questin oxidase tpcI leads to desmethylsulochrin via several intermediates including questin epoxide. Another methylation step catalyzed by tpcM leads to the formation of sulochrin which is further converted to monomethylsulfochrin by tpcH. Finally, the tpcJ catalyzes the conversion of monomethylsulfochrin to trypacidin. Trypacidin is toxic for human pulmonary and bronchial epithelial cells by initiating the intracellular formation of nitric oxide (NO) and hydrogen peroxide (H(2)O(2)), thus triggering host necrotic cell death. The trypacidin pathway is also able to produce endocrocin via a distinct route from the endocrocin Enc pathway. The sequence is that of Glutathione S-transferase-like protein tpcF from Aspergillus fumigatus (strain ATCC MYA-4609 / CBS 101355 / FGSC A1100 / Af293) (Neosartorya fumigata).